The chain runs to 86 residues: Large ribosomal subunit protein bL35m (86 aa).

The transit peptide at 1–18 (MLVVFQRVVRATVLVGRK) directs the protein to the mitochondrion. A disordered region spans residues 45 to 69 (RKHAGAQHLNRDTSSSTRARQRQWE).

This sequence belongs to the bacterial ribosomal protein bL35 family. In terms of assembly, component of the mitochondrial large ribosomal subunit (mt-LSU). Mature yeast 74S mitochondrial ribosomes consist of a small (37S) and a large (54S) subunit. The 37S small subunit contains a 15S ribosomal RNA (15S mt-rRNA) and at least 32 different proteins. The 54S large subunit contains a 21S rRNA (21S mt-rRNA) and at least 45 different proteins.

Its subcellular location is the mitochondrion. Its function is as follows. Component of the mitochondrial ribosome (mitoribosome), a dedicated translation machinery responsible for the synthesis of mitochondrial genome-encoded proteins, including at least some of the essential transmembrane subunits of the mitochondrial respiratory chain. The mitoribosomes are attached to the mitochondrial inner membrane and translation products are cotranslationally integrated into the membrane. This chain is Large ribosomal subunit protein bL35m (new15), found in Schizosaccharomyces pombe (strain 972 / ATCC 24843) (Fission yeast).